Consider the following 369-residue polypeptide: ATP-dependent 6-phosphofructokinase (369 aa).

ATP contacts are provided by residues Gly15, Lys81–Gly82, and Gly108–Ser111. Position 109 (Asp109) interacts with Mg(2+). Residues Thr132–Asp134, Arg169, Met176–Arg178, Glu230, Arg266, and His272–Arg275 contribute to the substrate site. Residue Asp134 is the Proton acceptor of the active site.

This sequence belongs to the phosphofructokinase type A (PFKA) family. Mixed-substrate PFK group III subfamily. Homodimer or homotetramer. Mg(2+) is required as a cofactor.

The protein resides in the cytoplasm. It catalyses the reaction beta-D-fructose 6-phosphate + ATP = beta-D-fructose 1,6-bisphosphate + ADP + H(+). Its pathway is carbohydrate degradation; glycolysis; D-glyceraldehyde 3-phosphate and glycerone phosphate from D-glucose: step 3/4. Functionally, catalyzes the phosphorylation of D-fructose 6-phosphate to fructose 1,6-bisphosphate by ATP, the first committing step of glycolysis. The chain is ATP-dependent 6-phosphofructokinase from Thermosynechococcus vestitus (strain NIES-2133 / IAM M-273 / BP-1).